The primary structure comprises 285 residues: V-type proton ATPase subunit D (285 aa).

Residues 208–226 (QKTKENAEKADSVTKEEHQ) show a composition bias toward basic and acidic residues. The tract at residues 208–285 (QKTKENAEKA…ENDSDEEVIF (78 aa)) is disordered. Phosphoserine is present on Ser-219. Polar residues predominate over residues 227 to 236 (GGSNTLQQTK). Residues 248–263 (VGKEVINEVENSKDDT) show a composition bias toward basic and acidic residues. The segment covering 271 to 285 (TDDEEENDSDEEVIF) has biased composition (acidic residues).

It belongs to the V-ATPase D subunit family. As to quaternary structure, V-ATPase is a heteromultimeric enzyme composed of a peripheral catalytic V1 complex (components A to H) attached to an integral membrane V0 proton pore complex (components: a, c, c', c'', d, e, f and VOA1).

Its subcellular location is the vacuole membrane. In terms of biological role, subunit of the V1 complex of vacuolar(H+)-ATPase (V-ATPase), a multisubunit enzyme composed of a peripheral complex (V1) that hydrolyzes ATP and a membrane integral complex (V0) that translocates protons. V-ATPase is responsible for acidifying and maintaining the pH of intracellular compartments. The polypeptide is V-type proton ATPase subunit D (vma8) (Schizosaccharomyces pombe (strain 972 / ATCC 24843) (Fission yeast)).